Reading from the N-terminus, the 101-residue chain is NAD(P)H-quinone oxidoreductase subunit 4L, chloroplastic (101 aa).

The next 3 helical transmembrane spans lie at 2–22, 32–52, and 61–81; these read MLEH…YGLI, MCLE…SDLF, and IFSI…PAIV.

This sequence belongs to the complex I subunit 4L family. As to quaternary structure, NDH is composed of at least 16 different subunits, 5 of which are encoded in the nucleus.

The protein localises to the plastid. The protein resides in the chloroplast thylakoid membrane. It carries out the reaction a plastoquinone + NADH + (n+1) H(+)(in) = a plastoquinol + NAD(+) + n H(+)(out). It catalyses the reaction a plastoquinone + NADPH + (n+1) H(+)(in) = a plastoquinol + NADP(+) + n H(+)(out). Its function is as follows. NDH shuttles electrons from NAD(P)H:plastoquinone, via FMN and iron-sulfur (Fe-S) centers, to quinones in the photosynthetic chain and possibly in a chloroplast respiratory chain. The immediate electron acceptor for the enzyme in this species is believed to be plastoquinone. Couples the redox reaction to proton translocation, and thus conserves the redox energy in a proton gradient. The sequence is that of NAD(P)H-quinone oxidoreductase subunit 4L, chloroplastic from Illicium oligandrum (Star anise).